A 237-amino-acid polypeptide reads, in one-letter code: Oligoribonuclease, mitochondrial (237 aa).

The transit peptide at 1–25 directs the protein to the mitochondrion; it reads MLGGSLGSRLLRGVGGTRGQFRARG. One can recognise an Exonuclease domain in the interval 43–207; sequence MVWVDLEMTG…DDISESIKEL (165 aa). Mg(2+) contacts are provided by Asp-47 and Glu-49. At Ser-92 the chain carries Phosphoserine. Tyr-122 is modified (phosphotyrosine). Position 147 (Asp-147) interacts with Mg(2+). An N6-acetyllysine modification is found at Lys-173. His-194 is an active-site residue. Asp-199 serves as a coordination point for Mg(2+).

It belongs to the oligoribonuclease family. Homodimer. Homotetramer. It depends on Mn(2+) as a cofactor. Mg(2+) serves as cofactor.

Its subcellular location is the mitochondrion intermembrane space. The protein resides in the mitochondrion matrix. It is found in the mitochondrion. It localises to the cytoplasm. The protein localises to the nucleus. Functionally, 3'-to-5'exoribonuclease that preferentially degrades DNA and RNA oligonucleotides composed of only two nucleotides. Binds and degrades longer oligonucleotides with a lower affinity. Plays dual roles in mitochondria, scavenging nanoRNAs (small RNA oligonucleotides of &lt;5 nucleotides) that are produced by the degradosome and clearing short RNAs that are generated by RNA processing. Essential for correct initiation of mitochondrial transcription, degrading mitochondrial RNA dinucleotides to prevent RNA-primed transcription at non-canonical sites in the mitochondrial genome. Essential for embryonic development. This chain is Oligoribonuclease, mitochondrial (REXO2), found in Bos taurus (Bovine).